The sequence spans 243 residues: Probable transcriptional regulatory protein BDU_30 (243 aa).

Belongs to the TACO1 family.

The protein resides in the cytoplasm. The chain is Probable transcriptional regulatory protein BDU_30 from Borrelia duttonii (strain Ly).